The primary structure comprises 189 residues: Leucine repeat adapter protein 25 (189 aa).

At serine 28 the chain carries Phosphoserine. A disordered region spans residues 55 to 81 (LSRAARAPDGPRHAAGSANLGSAAGPR). Over residues 68–79 (AAGSANLGSAAG) the composition is skewed to low complexity. An LRR repeat occupies 86 to 114 (LDSALAALRKEMVGLRQLDMSLLCQLWGL). The interval 141 to 174 (DSSYPPDAGLSDDDEPPDASLPPDPPPLTVPQTH) is disordered. Residues 159–169 (ASLPPDPPPLT) show a composition bias toward pro residues. The residue at position 188 (serine 188) is a Phosphoserine.

Belongs to the FAM89 family. In terms of assembly, interacts with SKI. Interacts (via LRR repeat) with CDC42BPA (via AGC-kinase C-terminal domain) and CDC42BPB (via AGC-kinase C-terminal domain). Interacts (via LRR repeat) with LIMK1 (via LIM zinc-binding domains). Forms a tripartite complex with CDC42BPA, CDC42BPB and LIMK1.

It localises to the cytoplasm. It is found in the cell projection. The protein localises to the lamellipodium. Functionally, negatively regulates TGF-beta-induced signaling; in cooperation with SKI prevents the translocation of SMAD2 from the nucleus to the cytoplasm in response to TGF-beta. Acts as an adapter that mediates the specific recognition of LIMK1 by CDC42BPA and CDC42BPB in the lamellipodia. LRAP25-mediated CDC42BPA/CDC42BPB targeting to LIMK1 and the lamellipodium results in LIMK1 activation and the subsequent phosphorylation of CFL1 which is important for lamellipodial F-actin regulation. This Rattus norvegicus (Rat) protein is Leucine repeat adapter protein 25.